The chain runs to 86 residues: Small ribosomal subunit protein uS17 (86 aa).

This sequence belongs to the universal ribosomal protein uS17 family. Part of the 30S ribosomal subunit.

One of the primary rRNA binding proteins, it binds specifically to the 5'-end of 16S ribosomal RNA. In Streptococcus pyogenes serotype M3 (strain ATCC BAA-595 / MGAS315), this protein is Small ribosomal subunit protein uS17.